A 152-amino-acid polypeptide reads, in one-letter code: Large ribosomal subunit protein uL15 (152 aa).

The interval 1 to 56 is disordered; that stretch reads MELNTLKPAKNSVKQNTRYGRGQGSGKGGTSTRGHKGAKSRSGYKSKPGFEGGQLP. Residues 21–31 show a composition bias toward gly residues; sequence RGQGSGKGGTS. The segment covering 33 to 44 has biased composition (basic residues); it reads RGHKGAKSRSGY.

It belongs to the universal ribosomal protein uL15 family. As to quaternary structure, part of the 50S ribosomal subunit.

In terms of biological role, binds to the 23S rRNA. The sequence is that of Large ribosomal subunit protein uL15 from Amoebophilus asiaticus (strain 5a2).